We begin with the raw amino-acid sequence, 287 residues long: Hydroxysteroid 11-beta-dehydrogenase 1-like protein (287 aa).

The signal sequence occupies residues 1–15 (MKVLLLTGLGALFFA). Residues 36 to 62 (GVSAGIGEELAYHYARLGSHLVLTAHT), 87 to 88 (DM), and 114 to 116 (NHL) contribute to the NADP(+) site. Ser-165 provides a ligand contact to substrate. Residue Tyr-178 is the Proton acceptor of the active site. NADP(+) contacts are provided by residues 178–182 (YSAAK) and 211–217 (GLRDRAS). N-linked (GlcNAc...) asparagine glycosylation is present at Asn-280.

The protein belongs to the short-chain dehydrogenases/reductases (SDR) family.

It is found in the secreted. The catalysed reaction is cortisone + NADPH + H(+) = cortisol + NADP(+). In terms of biological role, unidirectional NADP(+)-dependent cortisol dehydrogenase (in vitro). This is Hydroxysteroid 11-beta-dehydrogenase 1-like protein (HSD11B1L) from Bos taurus (Bovine).